We begin with the raw amino-acid sequence, 329 residues long: GTPase Obg (329 aa).

The Obg domain maps to Met-1 to Leu-159. The OBG-type G domain occupies Ala-160 to Gly-328. ATP is bound by residues Gly-166–Ser-173, Phe-191–Val-195, Asp-213–Gly-216, Asn-280–Glu-283, and Ser-309–Ala-311. Positions 173 and 193 each coordinate Mg(2+).

It belongs to the TRAFAC class OBG-HflX-like GTPase superfamily. OBG GTPase family. Monomer. The cofactor is Mg(2+).

It is found in the cytoplasm. In terms of biological role, an essential GTPase which binds GTP, GDP and possibly (p)ppGpp with moderate affinity, with high nucleotide exchange rates and a fairly low GTP hydrolysis rate. Plays a role in control of the cell cycle, stress response, ribosome biogenesis and in those bacteria that undergo differentiation, in morphogenesis control. The protein is GTPase Obg of Prochlorococcus marinus (strain MIT 9303).